We begin with the raw amino-acid sequence, 206 residues long: Small ribosomal subunit protein uS4 (206 aa).

Residues 23–47 are disordered; the sequence is AKSPLNRREYGPGQHGQRRKGKLSD. The 64-residue stretch at 94 to 157 folds into the S4 RNA-binding domain; that stretch reads RRLDAVIYRA…RQLAIVLESV (64 aa).

Belongs to the universal ribosomal protein uS4 family. In terms of assembly, part of the 30S ribosomal subunit. Contacts protein S5. The interaction surface between S4 and S5 is involved in control of translational fidelity.

Functionally, one of the primary rRNA binding proteins, it binds directly to 16S rRNA where it nucleates assembly of the body of the 30S subunit. With S5 and S12 plays an important role in translational accuracy. The sequence is that of Small ribosomal subunit protein uS4 from Paracoccus denitrificans (strain Pd 1222).